Consider the following 118-residue polypeptide: Small ribosomal subunit protein uS13 (118 aa).

The tract at residues 92-118 (RRGHPLRGQRTRTNARTRKGPRKAIRK) is disordered.

It belongs to the universal ribosomal protein uS13 family. Part of the 30S ribosomal subunit. Forms a loose heterodimer with protein S19. Forms two bridges to the 50S subunit in the 70S ribosome.

Functionally, located at the top of the head of the 30S subunit, it contacts several helices of the 16S rRNA. In the 70S ribosome it contacts the 23S rRNA (bridge B1a) and protein L5 of the 50S subunit (bridge B1b), connecting the 2 subunits; these bridges are implicated in subunit movement. Contacts the tRNAs in the A and P-sites. This is Small ribosomal subunit protein uS13 from Xanthomonas campestris pv. campestris (strain ATCC 33913 / DSM 3586 / NCPPB 528 / LMG 568 / P 25).